We begin with the raw amino-acid sequence, 386 residues long: uncharacterized protein (386 aa).

Residues 29 to 76 enclose the F-box domain; the sequence is KYWKFLNEDCKIEVLKYLDYCSRCQLSICSKSDHKLVSITPLYVYEIE.

This is an uncharacterized protein from Caenorhabditis elegans.